Reading from the N-terminus, the 219-residue chain is Ras-related protein Rab-3B (219 aa).

Ala-2 carries the N-acetylalanine modification. Positions 31, 32, 33, 34, 35, 36, 37, 49, and 53 each coordinate GTP. A Mg(2+)-binding site is contributed by Thr-36. Positions 45–58 match the Switch 1 motif; sequence DTFTPAFVSTVGID. Positions 54 and 77 each coordinate Mg(2+). A Switch 2 motif is present at residues 78 to 96; that stretch reads TAGQERYRTITTAYYRGAM. A GTP-binding site is contributed by Gly-80. Position 86 is a phosphothreonine (Thr-86). GTP contacts are provided by Asn-135, Lys-136, Asp-138, Ala-166, and Lys-167. A phosphoserine mark is found at Ser-188 and Ser-190. S-geranylgeranyl cysteine attachment occurs at residues Cys-217 and Cys-219. Cys-219 is modified (cysteine methyl ester).

This sequence belongs to the small GTPase superfamily. Rab family. Interacts with RPH3A and RPH3AL. Interacts with RIMS1. Interacts with RIMS2. The GTP-bound form interacts with GAS8/DRC4 (via coiled-coil domains). Interacts with GDI2, and CHM; phosphorylation at Thr-86 disrupts these interactions. Interacts with MADD (via uDENN domain); the GTP-bound form is preferred for interaction. Mg(2+) serves as cofactor. In terms of processing, phosphorylation of Thr-86 in the switch II region by LRRK2 prevents the association of RAB regulatory proteins, including CHM and RAB GDP dissociation inhibitor GDI2.

The protein localises to the cell membrane. It localises to the golgi apparatus. It carries out the reaction GTP + H2O = GDP + phosphate + H(+). Regulated by guanine nucleotide exchange factors (GEFs) which promote the exchange of bound GDP for free GTP. Regulated by GTPase activating proteins (GAPs) which increase the GTP hydrolysis activity. Inhibited by GDP dissociation inhibitors (GDIs) which prevent Rab-GDP dissociation. Functionally, the small GTPases Rab are key regulators of intracellular membrane trafficking, from the formation of transport vesicles to their fusion with membranes. Rabs cycle between an inactive GDP-bound form and an active GTP-bound form that is able to recruit to membranes different sets of downstream effectors directly responsible for vesicle formation, movement, tethering and fusion. This is Ras-related protein Rab-3B from Rattus norvegicus (Rat).